The chain runs to 583 residues: CTP synthase (583 aa).

Residues methionine 1 to leucine 278 are amidoligase domain. Serine 20 provides a ligand contact to CTP. Serine 20 provides a ligand contact to UTP. Residues serine 21–leucine 26 and aspartate 78 contribute to the ATP site. Mg(2+) contacts are provided by aspartate 78 and glutamate 152. CTP is bound by residues aspartate 159–glutamate 161, lysine 199–glutamine 204, and lysine 235. UTP-binding positions include lysine 199–glutamine 204 and lysine 235. The Glutamine amidotransferase type-1 domain occupies arginine 303–glycine 551. L-glutamine is bound at residue glycine 366. The active-site Nucleophile; for glutamine hydrolysis is the cysteine 393. Residues leucine 394–glutamine 397, glutamate 416, and arginine 477 each bind L-glutamine. Active-site residues include histidine 524 and glutamate 526. Residues proline 559 to glycine 583 form a disordered region.

Belongs to the CTP synthase family. Homotetramer.

The enzyme catalyses UTP + L-glutamine + ATP + H2O = CTP + L-glutamate + ADP + phosphate + 2 H(+). It catalyses the reaction L-glutamine + H2O = L-glutamate + NH4(+). It carries out the reaction UTP + NH4(+) + ATP = CTP + ADP + phosphate + 2 H(+). The protein operates within pyrimidine metabolism; CTP biosynthesis via de novo pathway; CTP from UDP: step 2/2. Its activity is regulated as follows. Allosterically activated by GTP, when glutamine is the substrate; GTP has no effect on the reaction when ammonia is the substrate. The allosteric effector GTP functions by stabilizing the protein conformation that binds the tetrahedral intermediate(s) formed during glutamine hydrolysis. Inhibited by the product CTP, via allosteric rather than competitive inhibition. In terms of biological role, catalyzes the ATP-dependent amination of UTP to CTP with either L-glutamine or ammonia as the source of nitrogen. Regulates intracellular CTP levels through interactions with the four ribonucleotide triphosphates. This is CTP synthase from Mycobacterium ulcerans (strain Agy99).